We begin with the raw amino-acid sequence, 377 residues long: Nitric oxide reductase FlRd-NAD(+) reductase (377 aa).

The protein belongs to the FAD-dependent oxidoreductase family. It depends on FAD as a cofactor.

The protein resides in the cytoplasm. The enzyme catalyses 2 reduced [nitric oxide reductase rubredoxin domain] + NAD(+) + H(+) = 2 oxidized [nitric oxide reductase rubredoxin domain] + NADH. Its pathway is nitrogen metabolism; nitric oxide reduction. Functionally, one of at least two accessory proteins for anaerobic nitric oxide (NO) reductase. Reduces the rubredoxin moiety of NO reductase. This Escherichia coli (strain 55989 / EAEC) protein is Nitric oxide reductase FlRd-NAD(+) reductase.